Here is a 607-residue protein sequence, read N- to C-terminus: Glutamine--fructose-6-phosphate aminotransferase [isomerizing] (607 aa).

The active-site Nucleophile; for GATase activity is cysteine 2. The Glutamine amidotransferase type-2 domain maps to cysteine 2–aspartate 218. 2 SIS domains span residues phenylalanine 280 to lysine 424 and isoleucine 457 to proline 597. Lysine 602 (for Fru-6P isomerization activity) is an active-site residue.

Homodimer.

The protein localises to the cytoplasm. It carries out the reaction D-fructose 6-phosphate + L-glutamine = D-glucosamine 6-phosphate + L-glutamate. In terms of biological role, catalyzes the first step in hexosamine metabolism, converting fructose-6P into glucosamine-6P using glutamine as a nitrogen source. The protein is Glutamine--fructose-6-phosphate aminotransferase [isomerizing] of Fusobacterium nucleatum subsp. nucleatum (strain ATCC 25586 / DSM 15643 / BCRC 10681 / CIP 101130 / JCM 8532 / KCTC 2640 / LMG 13131 / VPI 4355).